The sequence spans 395 residues: Secreted aspartyl protease 1 (395 aa).

The signal sequence occupies residues 1–20 (MQLSIQAIIGFVVAAGLAVA). The propeptide at 21-88 (SELPSPMTVN…HLLLDLIDKR (68 aa)) is removed in mature form. A glycan (N-linked (GlcNAc...) asparagine) is linked at asparagine 41. One can recognise a Peptidase A1 domain in the interval 105–391 (WAGDVQFGQS…DMGKNRMGFA (287 aa)). Catalysis depends on residues aspartate 121 and aspartate 283. Cysteine 321 and cysteine 352 are disulfide-bonded.

Belongs to the peptidase A1 family.

It is found in the secreted. Its activity is regulated as follows. Inhibited by pepstatin A. Its function is as follows. Dominant secreted aspartyl protease that has a clear preference for aromatic residues in the P1' position directly adjacent to the cleavage site and, in particular, Trp. In addition, it generally cleaves peptides containing Lys, Arg, Phe, Tyr, or Nle (norleucine) in the P1 position, Nle and Glu at P2, and Arg and Val at P2'. Has important roles in facilitating the interaction of the yeast with the external environment. Is able to rapidly hydrolyze Staphylococcus aureus protein A, an important S.aureus virulence factor involved in immune evasion and biofilm formation. Shows anti-biofilm properties and thus plays a role in inter-kingdom interactions, beneficial for host skin health. In Malassezia globosa (strain ATCC MYA-4612 / CBS 7966) (Dandruff-associated fungus), this protein is Secreted aspartyl protease 1.